The primary structure comprises 352 residues: Farnesyl pyrophosphate synthase (352 aa).

Isopentenyl diphosphate-binding residues include Lys52, Arg55, and Gln93. Mg(2+)-binding residues include Asp100 and Asp104. Arg109 is a binding site for dimethylallyl diphosphate. Arg110 serves as a coordination point for isopentenyl diphosphate. The dimethylallyl diphosphate site is built by Lys197, Thr198, Gln237, Lys254, and Lys263.

The protein belongs to the FPP/GGPP synthase family. Requires Mg(2+) as cofactor.

The enzyme catalyses isopentenyl diphosphate + dimethylallyl diphosphate = (2E)-geranyl diphosphate + diphosphate. The catalysed reaction is isopentenyl diphosphate + (2E)-geranyl diphosphate = (2E,6E)-farnesyl diphosphate + diphosphate. It participates in isoprenoid biosynthesis; farnesyl diphosphate biosynthesis; farnesyl diphosphate from geranyl diphosphate and isopentenyl diphosphate: step 1/1. The protein operates within isoprenoid biosynthesis; geranyl diphosphate biosynthesis; geranyl diphosphate from dimethylallyl diphosphate and isopentenyl diphosphate: step 1/1. In terms of biological role, farnesyl pyrophosphate synthase; part of the second module of ergosterol biosynthesis pathway that includes the middle steps of the pathway. ERG20 catalyzes the sequential condensation of isopentenyl pyrophosphate with dimethylallyl pyrophosphate, and then with the resultant geranylpyrophosphate to the ultimate product farnesyl pyrophosphate. The second module is carried out in the vacuole and involves the formation of farnesyl diphosphate, which is also an important intermediate in the biosynthesis of ubiquinone, dolichol, heme and prenylated proteins. Activity by the mevalonate kinase ERG12 first converts mevalonate into 5-phosphomevalonate. 5-phosphomevalonate is then further converted to 5-diphosphomevalonate by the phosphomevalonate kinase ERG8. The diphosphomevalonate decarboxylase MVD1/ERG19 then produces isopentenyl diphosphate. The isopentenyl-diphosphate delta-isomerase IDI1 then catalyzes the 1,3-allylic rearrangement of the homoallylic substrate isopentenyl (IPP) to its highly electrophilic allylic isomer, dimethylallyl diphosphate (DMAPP). Finally the farnesyl diphosphate synthase ERG20 catalyzes the sequential condensation of isopentenyl pyrophosphate with dimethylallyl pyrophosphate, and then with the resultant geranylpyrophosphate to the ultimate product farnesyl pyrophosphate. In Saccharomyces cerevisiae (strain ATCC 204508 / S288c) (Baker's yeast), this protein is Farnesyl pyrophosphate synthase (ERG20).